Consider the following 103-residue polypeptide: L-rhamnose-binding lectin ELEL-1 (103 aa).

Positions 13–102 constitute an SUEL-type lectin domain; that stretch reads VCEGSSLTIS…KYLELSYDCS (90 aa). 4 disulfide bridges follow: cysteine 14/cysteine 45, cysteine 23/cysteine 101, cysteine 56/cysteine 88, and cysteine 69/cysteine 75.

Homodimer; disulfide-linked. Post-translationally, not glycosylated.

Rhamnose-binding lectin. Also binds alpha-D-melibiose, alpha-D-lactose, beta-D-lactose, methyl-alpha-D-galactopyranoside, methyl-beta-D--galactopyranoside and D-galactose but not D-arabinose, L-fucose, D-glucose, D-mannose, D-maltose, D-sucrose, N-acetyl-D-galactosamine, N-acetyl-D-glucosamine, N-acetyl-D-mannosamine-D-xylose or by glycoproteins orosomucoid, thyroglobulin, ovomucoid and porcine stomach mucin. Shows cation-independent hemagglutinating activity against rabbit and human erythrocytes. Agglutinates cells of Gram-positive bacterial species S.aureus but not those of Gram-negative E.coli. This chain is L-rhamnose-binding lectin ELEL-1, found in Echinometra lucunter (Rock-boring urchin).